A 312-amino-acid chain; its full sequence is Aminoacyl tRNA synthase complex-interacting multifunctional protein 1 (312 aa).

Position 1 is an N-acetylmethionine (M1). At A2 the chain carries N-acetylalanine. The segment at 6-46 (AVLKRLEQKGAEADQIIEYLKQQVSLLKEKAILQATLREEK) is required for fibroblast proliferation. Residues 54–194 (KLKKEIEELK…APRTVVSGLV (141 aa)) form an interaction with HSP90B1 region. Residues 101 to 114 (AVTTVSSGTKEQIK) form a required for endothelial cell death region. Positions 107-147 (SGTKEQIKGGTGDEKKAKEKIEKKGEKKEKKQQSIAGSADS) are disordered. Residues 111-138 (EQIKGGTGDEKKAKEKIEKKGEKKEKKQ) are compositionally biased toward basic and acidic residues. The required for endothelial cell migration stretch occupies residues 114 to 192 (KGGTGDEKKA…EIAPRTVVSG (79 aa)). K137 is covalently cross-linked (Glycyl lysine isopeptide (Lys-Gly) (interchain with G-Cter in SUMO1)). S140 bears the Phosphoserine mark. Positions 151 to 252 (DVSRLDLRIG…NGSVPGDRIT (102 aa)) constitute a tRNA-binding domain. Residue K269 is modified to N6-succinyllysine.

In terms of assembly, homodimer. Part of the multisynthetase complex (MSC), a multisubunit complex that groups tRNA ligases for Arg (RARS1), Asp (DARS1), Gln (QARS1), Ile (IARS1), Leu (LARS1), Lys (KARS1), Met (MARS1) the bifunctional ligase for Glu and Pro (EPRS1) and the auxiliary subunits AIMP1/p43, AIMP2/p38 and EEF1E1/p18. Interacts (via N-terminus) with RARS1 (via N-terminus). Part of a complex composed of RARS1, QARS1 and AIMP1. Interacts (via C-terminus) with SMURF2. Interacts (via N-terminus) with HSP90B1/gp96 (via C-terminus). Interacts with PSMA7. Interacts with TARS3. Post-translationally, cleaved by caspase-7 in response to apoptosis to produce EMAP-II.

Its subcellular location is the nucleus. The protein localises to the cytoplasm. It is found in the cytosol. It localises to the secreted. The protein resides in the endoplasmic reticulum. Its subcellular location is the golgi apparatus. Its function is as follows. Non-catalytic component of the multisynthase complex. Stimulates the catalytic activity of cytoplasmic arginyl-tRNA synthase. Binds tRNA. Possesses inflammatory cytokine activity. Negatively regulates TGF-beta signaling through stabilization of SMURF2 by binding to SMURF2 and inhibiting its SMAD7-mediated degradation. Involved in glucose homeostasis through induction of glucagon secretion at low glucose levels. Promotes dermal fibroblast proliferation and wound repair. Regulates KDELR1-mediated retention of HSP90B1/gp96 in the endoplasmic reticulum. Plays a role in angiogenesis by inducing endothelial cell migration at low concentrations and endothelian cell apoptosis at high concentrations. Induces maturation of dendritic cells and monocyte cell adhesion. Modulates endothelial cell responses by degrading HIF-1A through interaction with PSMA7. The protein is Aminoacyl tRNA synthase complex-interacting multifunctional protein 1 (AIMP1) of Homo sapiens (Human).